A 298-amino-acid polypeptide reads, in one-letter code: Nucleotide-binding protein RSKD131_3085 (298 aa).

Residue 11-18 participates in ATP binding; it reads GPSGAGRT. 58–61 contacts GTP; that stretch reads DVRN.

This sequence belongs to the RapZ-like family.

Its function is as follows. Displays ATPase and GTPase activities. The protein is Nucleotide-binding protein RSKD131_3085 of Cereibacter sphaeroides (strain KD131 / KCTC 12085) (Rhodobacter sphaeroides).